We begin with the raw amino-acid sequence, 180 residues long: UPF0227 protein Shew_1627 (180 aa).

This sequence belongs to the UPF0227 family.

This chain is UPF0227 protein Shew_1627, found in Shewanella loihica (strain ATCC BAA-1088 / PV-4).